A 472-amino-acid polypeptide reads, in one-letter code: uncharacterized protein (472 aa).

Low complexity-rich tracts occupy residues 1–21 (MAFSSSSLRRSLKLGRGSRPG) and 63–74 (ASSLPAPASSSP). The interval 1–74 (MAFSSSSLRR…SLPAPASSSP (74 aa)) is disordered.

This is an uncharacterized protein from Equus caballus (Horse).